A 426-amino-acid polypeptide reads, in one-letter code: MTDSAFTRAARVIPGGVNSPVRAFKSVGGEPIFIARAEGAYLYDVNGRRYIDYVGSYGPMINGHAHPEIVAAVCRASRNGMSYGAPNELETELAEKIVARVPSVEMVRMCNSGTEATMSAIRLARAATNRTQILKFAGCYHGHSDALLVSAGSGALTFGSPNSPGVPEDFVRHTLTAPYNDIAALERIFVQHGKNLAAVIVEPIAGNMNCVPPLPEFLPTLRALTKKYGVILIIDEVMTGFRVAYAGAQGLYDIAADLTTFGKVIGGGMPVGAFAGSADLMSMLSPVGSVYQAGTLSGNPVAMIAGITNLRLTEAEGFYDTLAAKTQKLAEGLRQAAKKNGIHVVVNDVCGMLGLFFTDLPQVCNFADVQTADTARFAKFFHAMLAEGVNLAPSAYETIFVSMAHDDAVLDETIAIAEYVFAHLEE.

Residue Lys-263 is modified to N6-(pyridoxal phosphate)lysine.

The protein belongs to the class-III pyridoxal-phosphate-dependent aminotransferase family. HemL subfamily. As to quaternary structure, homodimer. It depends on pyridoxal 5'-phosphate as a cofactor.

The protein localises to the cytoplasm. The enzyme catalyses (S)-4-amino-5-oxopentanoate = 5-aminolevulinate. The protein operates within porphyrin-containing compound metabolism; protoporphyrin-IX biosynthesis; 5-aminolevulinate from L-glutamyl-tRNA(Glu): step 2/2. The chain is Glutamate-1-semialdehyde 2,1-aminomutase from Dichelobacter nodosus (strain VCS1703A).